A 488-amino-acid polypeptide reads, in one-letter code: Alpha-ketoglutaric semialdehyde dehydrogenase (488 aa).

Residues lysine 180 and 233-238 (GSNQVG) contribute to the NAD(+) site. Glutamate 255 functions as the Proton acceptor in the catalytic mechanism. Cysteine 289 functions as the Nucleophile in the catalytic mechanism. NAD(+) is bound by residues glutamine 336 and glutamate 390.

Belongs to the aldehyde dehydrogenase family. As to quaternary structure, homotetramer.

The catalysed reaction is 2,5-dioxopentanoate + NADP(+) + H2O = 2-oxoglutarate + NADPH + 2 H(+). It catalyses the reaction 2,5-dioxopentanoate + NAD(+) + H2O = 2-oxoglutarate + NADH + 2 H(+). In terms of biological role, catalyzes the NAD(P)(+)-dependent oxidation of alpha-ketoglutaric semialdehyde (alphaKGSA) to alpha-ketoglutarate. Prefers NADP(+) to NAD(+) as a cosubstrate. In vitro, can also use various aldehydes. The chain is Alpha-ketoglutaric semialdehyde dehydrogenase from Bacillus subtilis (strain 168).